A 439-amino-acid polypeptide reads, in one-letter code: Tol-Pal system protein TolB (439 aa).

An N-terminal signal peptide occupies residues 1 to 22 (MKKPLRWLAALTVLLLPLSALA).

The protein belongs to the TolB family. As to quaternary structure, the Tol-Pal system is composed of five core proteins: the inner membrane proteins TolA, TolQ and TolR, the periplasmic protein TolB and the outer membrane protein Pal. They form a network linking the inner and outer membranes and the peptidoglycan layer.

It is found in the periplasm. In terms of biological role, part of the Tol-Pal system, which plays a role in outer membrane invagination during cell division and is important for maintaining outer membrane integrity. The chain is Tol-Pal system protein TolB from Xanthomonas oryzae pv. oryzae (strain PXO99A).